Here is a 76-residue protein sequence, read N- to C-terminus: MAKVDIDIVDFEYIEEIIRNRYPELSITSIHDDPNYCNXXIVIEGPLEDLTRFMANEYCDGMDSEDAEFYMGLIEQ.

This is an uncharacterized protein from Enterobacteria phage LZ3 (Bacteriophage LZ3).